Consider the following 129-residue polypeptide: Fluoride-specific ion channel FluC 2 (129 aa).

4 helical membrane passes run 3 to 23 (FLYV…MNLW), 32 to 52 (ATLA…PFLA), 59 to 79 (LVLL…FSAF), and 90 to 110 (GEVV…LVMV). The Na(+) site is built by glycine 71 and threonine 74.

Belongs to the fluoride channel Fluc/FEX (TC 1.A.43) family.

The protein resides in the cell membrane. It carries out the reaction fluoride(in) = fluoride(out). Its activity is regulated as follows. Na(+) is not transported, but it plays an essential structural role and its presence is essential for fluoride channel function. In terms of biological role, fluoride-specific ion channel. Important for reducing fluoride concentration in the cell, thus reducing its toxicity. This Listeria innocua serovar 6a (strain ATCC BAA-680 / CLIP 11262) protein is Fluoride-specific ion channel FluC 2.